The sequence spans 256 residues: UPF0644 protein PB2B4.06 (256 aa).

The chain crosses the membrane as a helical span at residues 34–56 (GVVYAGVSGTCAAAGYMFGNFVM).

It belongs to the UPF0644 family.

The protein localises to the mitochondrion membrane. This chain is UPF0644 protein PB2B4.06, found in Schizosaccharomyces pombe (strain 972 / ATCC 24843) (Fission yeast).